We begin with the raw amino-acid sequence, 85 residues long: Large ribosomal subunit protein bL27 (85 aa).

The disordered stretch occupies residues 1–20 (MAHKKAGGSTRNGRDSEAKR).

This sequence belongs to the bacterial ribosomal protein bL27 family.

This is Large ribosomal subunit protein bL27 from Klebsiella pneumoniae (strain 342).